Reading from the N-terminus, the 318-residue chain is tRNA uridine(34) hydroxylase (318 aa).

Positions 123 to 217 (EDDDTVIIDA…YGKDPETKSE (95 aa)) constitute a Rhodanese domain. Cys177 serves as the catalytic Cysteine persulfide intermediate.

This sequence belongs to the TrhO family.

The enzyme catalyses uridine(34) in tRNA + AH2 + O2 = 5-hydroxyuridine(34) in tRNA + A + H2O. Functionally, catalyzes oxygen-dependent 5-hydroxyuridine (ho5U) modification at position 34 in tRNAs. This chain is tRNA uridine(34) hydroxylase, found in Staphylococcus aureus (strain COL).